The primary structure comprises 259 residues: Ribonuclease T2-B (259 aa).

The signal sequence occupies residues methionine 1–alanine 29. Cysteine 53 and cysteine 59 form a disulfide bridge. The active site involves histidine 69. 3 disulfides stabilise this stretch: cysteine 79–cysteine 125, cysteine 188–cysteine 244, and cysteine 206–cysteine 217. N-linked (GlcNAc...) asparagine glycans are attached at residues asparagine 80 and asparagine 110. Residues glutamate 118 and histidine 122 contribute to the active site. Asparagine 216 is a glycosylation site (N-linked (GlcNAc...) asparagine).

Belongs to the RNase T2 family.

It is found in the secreted. Its subcellular location is the lysosome lumen. The protein resides in the endoplasmic reticulum lumen. The protein localises to the mitochondrion intermembrane space. The enzyme catalyses a ribonucleotidyl-ribonucleotide-RNA + H2O = a 3'-end 3'-phospho-ribonucleotide-RNA + a 5'-end dephospho-ribonucleoside-RNA + H(+). It catalyses the reaction an adenylyl-uridine-RNA = a 3'-end 2',3'-cyclophospho-AMP-RNA + a 5'-end dephospho-uridine-RNA. It carries out the reaction a guanylyl-uridine-RNA = a 3'-end 2',3'-cyclophospho-GMP-RNA + a 5'-end dephospho-uridine-RNA. Its activity is regulated as follows. Inhibited by Zn(2+) and Cu(2+). In terms of biological role, ribonuclease that plays an essential role in innate immune response by recognizing and degrading RNAs from microbial pathogens that are subsequently sensed by TLR8. Cleaves preferentially single-stranded RNA molecules between purine and uridine residues, which critically contributes to the supply of catabolic uridine and the generation of purine-2',3'-cyclophosphate-terminated oligoribonucleotides. In turn, RNase T2 degradation products promote the RNA-dependent activation of TLR8. In plasmacytoid dendritic cells, it cooperates with PLD3 or PLD4 5'-&gt;3' exonucleases to process RNA fragments and release 2',3'-cyclic guanosine monophosphate (2',3'-cGMP), a potent stimulatory ligand for TLR7. Also plays a key role in degradation of mitochondrial RNA and processing of non-coding RNA imported from the cytosol into mitochondria. Participates as well in degradation of mitochondrion-associated cytosolic rRNAs. The chain is Ribonuclease T2-B from Mus musculus (Mouse).